The sequence spans 37 residues: Large ribosomal subunit protein bL36 (37 aa).

This sequence belongs to the bacterial ribosomal protein bL36 family.

This chain is Large ribosomal subunit protein bL36, found in Desulforudis audaxviator (strain MP104C).